Reading from the N-terminus, the 390-residue chain is O-phospho-L-seryl-tRNA:Cys-tRNA synthase 2 (390 aa).

Residues 83–84 (AR), Asn187, and 210–212 (SGH) contribute to the pyridoxal 5'-phosphate site. The residue at position 213 (Lys213) is an N6-(pyridoxal phosphate)lysine.

This sequence belongs to the SepCysS family. Homodimer. Interacts with SepRS. It depends on pyridoxal 5'-phosphate as a cofactor.

It catalyses the reaction O-phospho-L-seryl-tRNA(Cys) + hydrogen sulfide + H(+) = L-cysteinyl-tRNA(Cys) + phosphate. Functionally, converts O-phospho-L-seryl-tRNA(Cys) (Sep-tRNA(Cys)) to L-cysteinyl-tRNA(Cys) (Cys-tRNA(Cys)). This Archaeoglobus fulgidus (strain ATCC 49558 / DSM 4304 / JCM 9628 / NBRC 100126 / VC-16) protein is O-phospho-L-seryl-tRNA:Cys-tRNA synthase 2.